Here is a 498-residue protein sequence, read N- to C-terminus: N-acyl-D-aspartate deacylase (498 aa).

The segment at 478 to 498 (AERPGQVLAPGDAIPWSQQSE) is disordered.

It belongs to the metallo-dependent hydrolases superfamily. N-acyl-D-amino-acid deacylase family. It depends on Zn(2+) as a cofactor.

The protein resides in the cytoplasm. The catalysed reaction is an N-acyl-D-aspartate + H2O = D-aspartate + a carboxylate. The chain is N-acyl-D-aspartate deacylase from Alcaligenes xylosoxydans xylosoxydans (Achromobacter xylosoxidans).